Reading from the N-terminus, the 442-residue chain is UDP-N-acetylmuramoylalanine--D-glutamate ligase (442 aa).

115–121 lines the ATP pocket; sequence GSNGKST.

The protein belongs to the MurCDEF family.

The protein localises to the cytoplasm. It carries out the reaction UDP-N-acetyl-alpha-D-muramoyl-L-alanine + D-glutamate + ATP = UDP-N-acetyl-alpha-D-muramoyl-L-alanyl-D-glutamate + ADP + phosphate + H(+). Its pathway is cell wall biogenesis; peptidoglycan biosynthesis. Cell wall formation. Catalyzes the addition of glutamate to the nucleotide precursor UDP-N-acetylmuramoyl-L-alanine (UMA). The sequence is that of UDP-N-acetylmuramoylalanine--D-glutamate ligase from Aliivibrio salmonicida (strain LFI1238) (Vibrio salmonicida (strain LFI1238)).